The following is an 842-amino-acid chain: Leucine--tRNA ligase (842 aa).

A 'HIGH' region motif is present at residues 44–55 (PYPSANGLHVGH). The 'KMSKS' region signature appears at 619–623 (KMSKS). Lys-622 provides a ligand contact to ATP.

The protein belongs to the class-I aminoacyl-tRNA synthetase family.

The protein localises to the cytoplasm. The enzyme catalyses tRNA(Leu) + L-leucine + ATP = L-leucyl-tRNA(Leu) + AMP + diphosphate. This is Leucine--tRNA ligase from Borrelia recurrentis (strain A1).